The chain runs to 92 residues: Cell division protein FtsB (92 aa).

Over 1-3 (MKW) the chain is Cytoplasmic. A helical membrane pass occupies residues 4–21 (VTVVLSFALVCCQYSLWF). Residues 22–92 (GKGSIGRNSS…TFYRLIRHNR (71 aa)) lie on the Periplasmic side of the membrane. The stretch at 28-50 (RNSSLREQIAVQEEKNQTLALRN) forms a coiled coil.

It belongs to the FtsB family. In terms of assembly, part of a complex composed of FtsB, FtsL and FtsQ.

It is found in the cell inner membrane. In terms of biological role, essential cell division protein. May link together the upstream cell division proteins, which are predominantly cytoplasmic, with the downstream cell division proteins, which are predominantly periplasmic. This Neisseria meningitidis serogroup C (strain 053442) protein is Cell division protein FtsB.